The following is a 293-amino-acid chain: Protease HtpX (293 aa).

Helical transmembrane passes span 4–24 and 34–54; these read IALFLITNLAVMLVFGLVLSL and GLMIMAGLFGFGGAFVSLLMS. His-139 contacts Zn(2+). Glu-140 is an active-site residue. Residue His-143 participates in Zn(2+) binding. The next 2 helical transmembrane spans lie at 158-178 and 193-213; these read IVNTFVIFISRLIAQVVSGFL and MVYFAVATVLELVFGILASII. Glu-222 provides a ligand contact to Zn(2+).

The protein belongs to the peptidase M48B family. Zn(2+) serves as cofactor.

Its subcellular location is the cell inner membrane. The chain is Protease HtpX from Pectobacterium atrosepticum (strain SCRI 1043 / ATCC BAA-672) (Erwinia carotovora subsp. atroseptica).